Here is a 216-residue protein sequence, read N- to C-terminus: Large ribosomal subunit protein uL3 (216 aa).

N5-methylglutamine is present on Q157.

This sequence belongs to the universal ribosomal protein uL3 family. Part of the 50S ribosomal subunit. Forms a cluster with proteins L14 and L19. Methylated by PrmB.

Functionally, one of the primary rRNA binding proteins, it binds directly near the 3'-end of the 23S rRNA, where it nucleates assembly of the 50S subunit. This is Large ribosomal subunit protein uL3 from Stenotrophomonas maltophilia (strain R551-3).